Here is a 342-residue protein sequence, read N- to C-terminus: Dihydroorotase (342 aa).

Residues His-13 and His-15 each contribute to the Zn(2+) site. Residues 15–17 (HLR) and Asn-41 contribute to the substrate site. Zn(2+) is bound by residues Lys-97, His-134, and His-172. Position 97 is an N6-carboxylysine (Lys-97). His-134 provides a ligand contact to substrate. Substrate is bound at residue Leu-217. Asp-245 lines the Zn(2+) pocket. Residue Asp-245 is part of the active site. Substrate contacts are provided by His-249 and Ala-261.

Belongs to the metallo-dependent hydrolases superfamily. DHOase family. Class II DHOase subfamily. In terms of assembly, homodimer. Zn(2+) serves as cofactor.

It catalyses the reaction (S)-dihydroorotate + H2O = N-carbamoyl-L-aspartate + H(+). The protein operates within pyrimidine metabolism; UMP biosynthesis via de novo pathway; (S)-dihydroorotate from bicarbonate: step 3/3. Functionally, catalyzes the reversible cyclization of carbamoyl aspartate to dihydroorotate. The polypeptide is Dihydroorotase (Shewanella loihica (strain ATCC BAA-1088 / PV-4)).